The primary structure comprises 782 residues: Translation initiation factor IF-2 (782 aa).

Positions 1–14 are enriched in basic and acidic residues; it reads MSKNIDDKNEDGKK. Disordered stretches follow at residues 1-106 and 132-174; these read MSKN…KKTY and SIVS…AETE. Residues 15-25 are compositionally biased toward basic residues; it reads IKIIKLRKKVV. Residues 31-43 show a composition bias toward polar residues; the sequence is NDLSGKNNPSGST. Residues 44–61 are compositionally biased toward basic and acidic residues; the sequence is DLHKHNNKVEYSHSRDGR. Composition is skewed to polar residues over residues 86-106 and 133-142; these read GYSQNRDSLTSQYQGSTKKTY and IVSSASSTDS. Basic and acidic residues predominate over residues 143-159; the sequence is ENSKELNRKLGEKKKQQ. The tr-type G domain occupies 280 to 453; the sequence is EKPPVITIMG…DMMLLKANPS (174 aa). The segment at 289–296 is G1; sequence GHVDHGKT. 289 to 296 contributes to the GTP binding site; that stretch reads GHVDHGKT. Residues 314-318 are G2; the sequence is GITQH. Residues 335–338 are G3; sequence DTPG. GTP is bound by residues 335–339 and 389–392; these read DTPGH and NKID. Residues 389–392 are G4; the sequence is NKID. A G5 region spans residues 425–427; it reads SAL.

The protein belongs to the TRAFAC class translation factor GTPase superfamily. Classic translation factor GTPase family. IF-2 subfamily.

It is found in the cytoplasm. Functionally, one of the essential components for the initiation of protein synthesis. Protects formylmethionyl-tRNA from spontaneous hydrolysis and promotes its binding to the 30S ribosomal subunits. Also involved in the hydrolysis of GTP during the formation of the 70S ribosomal complex. This chain is Translation initiation factor IF-2, found in Borreliella afzelii (strain PKo) (Borrelia afzelii).